We begin with the raw amino-acid sequence, 431 residues long: MTKSAELYQKAQQTIPGGVNSPVRAFNGVGGSPIFVERADGAFIFDADGKAYIDYVGSWGPMILGHNHAVIREAVIEAAQRGLSFGAPTEMEIKMAELVSELVPSMEQLRMVSSGTEATMSAIRLARGFTGRDKILKFEGCYHGHADSLLVKAGSGALTLGQPSSPGVPADFAKHTLTATFNDLDSVRELFAANKGEIACIIVEPVAGNMNCIPPVEGFHEGLREICDQEGALLIFDEVMTGFRVALGGAQAHYNIKPDLTTLGKVIGGGMPVGAFGGRKEVMQYIAPTGPVYQAGTLSGNPVAMAAGYACLTLLREEGNEKRLASKTKHLADGFKSLAAQHGIPLVVNQVGGMFGFFFTEQEQITCYEDVTKCDLERFKRFFHLMIDHGVYLAPSAFEASFTSLAHGSKEIEATLEAADRCFAILAAESK.

An N6-(pyridoxal phosphate)lysine modification is found at K265.

It belongs to the class-III pyridoxal-phosphate-dependent aminotransferase family. HemL subfamily. As to quaternary structure, homodimer. The cofactor is pyridoxal 5'-phosphate.

The protein resides in the cytoplasm. The catalysed reaction is (S)-4-amino-5-oxopentanoate = 5-aminolevulinate. It participates in porphyrin-containing compound metabolism; protoporphyrin-IX biosynthesis; 5-aminolevulinate from L-glutamyl-tRNA(Glu): step 2/2. This is Glutamate-1-semialdehyde 2,1-aminomutase from Vibrio vulnificus (strain YJ016).